We begin with the raw amino-acid sequence, 170 residues long: Acireductone dioxygenase (170 aa).

Fe(2+)-binding residues include histidine 99, histidine 101, glutamate 105, and histidine 144. Ni(2+)-binding residues include histidine 99, histidine 101, glutamate 105, and histidine 144.

This sequence belongs to the acireductone dioxygenase (ARD) family. Monomer. The cofactor is Fe(2+). It depends on Ni(2+) as a cofactor.

The enzyme catalyses 1,2-dihydroxy-5-(methylsulfanyl)pent-1-en-3-one + O2 = 3-(methylsulfanyl)propanoate + CO + formate + 2 H(+). The catalysed reaction is 1,2-dihydroxy-5-(methylsulfanyl)pent-1-en-3-one + O2 = 4-methylsulfanyl-2-oxobutanoate + formate + 2 H(+). Its pathway is amino-acid biosynthesis; L-methionine biosynthesis via salvage pathway; L-methionine from S-methyl-5-thio-alpha-D-ribose 1-phosphate: step 5/6. Its function is as follows. Catalyzes 2 different reactions between oxygen and the acireductone 1,2-dihydroxy-3-keto-5-methylthiopentene (DHK-MTPene) depending upon the metal bound in the active site. Fe-containing acireductone dioxygenase (Fe-ARD) produces formate and 2-keto-4-methylthiobutyrate (KMTB), the alpha-ketoacid precursor of methionine in the methionine recycle pathway. Ni-containing acireductone dioxygenase (Ni-ARD) produces methylthiopropionate, carbon monoxide and formate, and does not lie on the methionine recycle pathway. This Bacillus mycoides (strain KBAB4) (Bacillus weihenstephanensis) protein is Acireductone dioxygenase.